Consider the following 186-residue polypeptide: MGKEIQLKPKANVSSYVHFLLNYRNKFKEQQPNTYVGFKEFSRKCSEKWRSISKHEKAKYEALAKLDKARYQEEMMNYVGKRKKRRKRDPQEPRRPPSSFLLFCQDHYAQLKRENPNWSVVQVAKATGKMWSTATDLEKHPYEQRVALLRAKYFEELELYRKQCNARKKYRMSARNRCRGKRVRQS.

2 consecutive DNA-binding regions (HMG box) follow at residues 9 to 79 (PKAN…MNYV) and 93 to 161 (PRRP…ELYR). The tract at residues 77-98 (NYVGKRKKRRKRDPQEPRRPPS) is disordered.

This sequence belongs to the HMGB family.

The protein resides in the nucleus. Its subcellular location is the chromosome. The chain is High mobility group protein B4 (HMGB4) from Homo sapiens (Human).